The following is a 262-amino-acid chain: Small ribosomal subunit protein eS4 (262 aa).

Positions 42–105 constitute an S4 RNA-binding domain; the sequence is LPLVVFLRNR…NEHFRLVYDV (64 aa). The region spanning 178–211 is the KOW domain; it reads GRLVMVTGGRNLGRVGVIVHREKHEGGFDLVHIK.

It belongs to the eukaryotic ribosomal protein eS4 family. Component of the small ribosomal subunit. Mature ribosomes consist of a small (40S) and a large (60S) subunit. The 40S subunit contains about 32 different proteins and 1 molecule of RNA (18S). The 60S subunit contains 45 different proteins and 3 molecules of RNA (25S, 5.8S and 5S).

The protein resides in the cytoplasm. Functionally, component of the ribosome, a large ribonucleoprotein complex responsible for the synthesis of proteins in the cell. The small ribosomal subunit (SSU) binds messenger RNAs (mRNAs) and translates the encoded message by selecting cognate aminoacyl-transfer RNA (tRNA) molecules. The large subunit (LSU) contains the ribosomal catalytic site termed the peptidyl transferase center (PTC), which catalyzes the formation of peptide bonds, thereby polymerizing the amino acids delivered by tRNAs into a polypeptide chain. The nascent polypeptides leave the ribosome through a tunnel in the LSU and interact with protein factors that function in enzymatic processing, targeting, and the membrane insertion of nascent chains at the exit of the ribosomal tunnel. The polypeptide is Small ribosomal subunit protein eS4 (RPS42) (Candida albicans (strain SC5314 / ATCC MYA-2876) (Yeast)).